A 151-amino-acid chain; its full sequence is Deoxyuridine 5'-triphosphate nucleotidohydrolase (151 aa).

Substrate-binding positions include 70–72, asparagine 83, 87–89, and methionine 97; these read RSG and LID.

The protein belongs to the dUTPase family. The cofactor is Mg(2+).

The catalysed reaction is dUTP + H2O = dUMP + diphosphate + H(+). The protein operates within pyrimidine metabolism; dUMP biosynthesis; dUMP from dCTP (dUTP route): step 2/2. This enzyme is involved in nucleotide metabolism: it produces dUMP, the immediate precursor of thymidine nucleotides and it decreases the intracellular concentration of dUTP so that uracil cannot be incorporated into DNA. The protein is Deoxyuridine 5'-triphosphate nucleotidohydrolase of Shigella sonnei (strain Ss046).